Here is a 179-residue protein sequence, read N- to C-terminus: Large ribosomal subunit protein uL6 (179 aa).

It belongs to the universal ribosomal protein uL6 family. As to quaternary structure, part of the 50S ribosomal subunit.

Its function is as follows. This protein binds to the 23S rRNA, and is important in its secondary structure. It is located near the subunit interface in the base of the L7/L12 stalk, and near the tRNA binding site of the peptidyltransferase center. The sequence is that of Large ribosomal subunit protein uL6 from Nocardia farcinica (strain IFM 10152).